Consider the following 3380-residue polypeptide: Apolipophorins (3380 aa).

An N-terminal signal peptide occupies residues 1-21 (MGTPPHIWFLLILAISSGGLS). The Vitellogenin domain maps to 40–646 (YQKGQTYTYS…SQSSYLPRSV (607 aa)). N-linked (GlcNAc...) asparagine glycans are attached at residues asparagine 132, asparagine 649, asparagine 969, asparagine 2174, asparagine 2851, and asparagine 3177. The VWFD domain maps to 2815-2979 (ATAILLNSHH…NAWKVDAQCA (165 aa)). An intrachain disulfide couples cysteine 2839 to cysteine 2978.

Cleaved into 2 chains by furin protease. However, prevention of cleavage does not impair its function. Post-translationally, N-glycosylated. In terms of tissue distribution, present in brain, hemolymph, fat body and eyes.

The protein localises to the secreted. In terms of biological role, constitutes the major component of lipophorin, which mediates transport for various types of lipids in hemolymph. Acts by forming lipoprotein particles that bind lipoproteins and lipids. May be required for morphogens wingless (wg) and hedgehog (hh) function, possibly by acting as vehicles for the movement of wg and hh. In Locusta migratoria (Migratory locust), this protein is Apolipophorins.